A 156-amino-acid chain; its full sequence is Small ribosomal subunit protein uS7 (156 aa).

Belongs to the universal ribosomal protein uS7 family. In terms of assembly, part of the 30S ribosomal subunit. Contacts proteins S9 and S11.

In terms of biological role, one of the primary rRNA binding proteins, it binds directly to 16S rRNA where it nucleates assembly of the head domain of the 30S subunit. Is located at the subunit interface close to the decoding center, probably blocks exit of the E-site tRNA. The polypeptide is Small ribosomal subunit protein uS7 (Aliivibrio salmonicida (strain LFI1238) (Vibrio salmonicida (strain LFI1238))).